Here is a 347-residue protein sequence, read N- to C-terminus: Nicotinate-nucleotide--dimethylbenzimidazole phosphoribosyltransferase (347 aa).

Residue E316 is the Proton acceptor of the active site.

This sequence belongs to the CobT family.

The catalysed reaction is 5,6-dimethylbenzimidazole + nicotinate beta-D-ribonucleotide = alpha-ribazole 5'-phosphate + nicotinate + H(+). Its pathway is nucleoside biosynthesis; alpha-ribazole biosynthesis; alpha-ribazole from 5,6-dimethylbenzimidazole: step 1/2. In terms of biological role, catalyzes the synthesis of alpha-ribazole-5'-phosphate from nicotinate mononucleotide (NAMN) and 5,6-dimethylbenzimidazole (DMB). The polypeptide is Nicotinate-nucleotide--dimethylbenzimidazole phosphoribosyltransferase (Vibrio parahaemolyticus serotype O3:K6 (strain RIMD 2210633)).